Reading from the N-terminus, the 223-residue chain is Phosphoglycolate phosphatase (223 aa).

The active-site Nucleophile is Asp10. Residues Asp10 and Asp12 each coordinate Mg(2+). Lys149 contributes to the substrate binding site. Mg(2+) contacts are provided by Asp172 and Asp176.

It belongs to the archaeal SPP-like hydrolase family. Mg(2+) is required as a cofactor.

The catalysed reaction is 2-phosphoglycolate + H2O = glycolate + phosphate. Functionally, catalyzes the dephosphorylation of 2-phosphoglycolate. This is Phosphoglycolate phosphatase from Archaeoglobus fulgidus (strain ATCC 49558 / DSM 4304 / JCM 9628 / NBRC 100126 / VC-16).